The primary structure comprises 545 residues: Sphingomyelin phosphodiesterase 5 (545 aa).

A mitochondrion-targeting transit peptide spans 1–35 (MSLRESPFPNGFLEGLHAVGWGLIFPCFWFLDRLI). Topologically, residues 36-64 (AVCISTTLERMWRLEQECYLHPLKVVFGS) are mitochondrial matrix. The helical; Signal-anchor for type II membrane protein transmembrane segment at 65–85 (ILFFILFVISTPFALLGFILW) threads the bilayer. Topologically, residues 86-545 (APLQAIRRPF…LSVSLDSEQN (460 aa)) are mitochondrial intermembrane. Position 258 (Glu-258) interacts with Mg(2+). The active-site Proton acceptor is His-529.

This sequence belongs to the neutral sphingomyelinase family. The cofactor is Mg(2+). Requires Mn(2+) as cofactor.

It localises to the mitochondrion inner membrane. Its subcellular location is the endoplasmic reticulum membrane. It catalyses the reaction a sphingomyelin + H2O = phosphocholine + an N-acylsphing-4-enine + H(+). The enzyme catalyses N-(hexadecanoyl)-sphing-4-enine-1-phosphocholine + H2O = N-hexadecanoylsphing-4-enine + phosphocholine + H(+). It functions in the pathway lipid metabolism; sphingolipid metabolism. Its activity is regulated as follows. Activated by the phospholipids cardiolipin, phosphatidylserine, and phosphatidylethanolamine. Strongest activation with cardiolipin. Functionally, catalyzes the hydrolysis of membrane sphingomyelin to form phosphorylcholine and ceramide. The polypeptide is Sphingomyelin phosphodiesterase 5 (Danio rerio (Zebrafish)).